The primary structure comprises 664 residues: Cyclic nucleotide-gated channel alpha-2 (664 aa).

Residues 1 to 10 are compositionally biased toward polar residues; the sequence is MMTEKSNGVK. Residues 1 to 51 are disordered; sequence MMTEKSNGVKSSPANNHNHHPPPSIKANGKDDHRAGSRPQSVAADDDTSPE. Topologically, residues 1–146 are cytoplasmic; sequence MMTEKSNGVK…PAGDWYYRWL (146 aa). The helical transmembrane segment at 147-168 threads the bilayer; the sequence is FVIAMPVLYNWCLLVARACFSD. At 169–178 the chain is on the extracellular side; it reads LQRNYFVVWL. The chain crosses the membrane as a helical span at residues 179 to 199; it reads VLDYFSDTVYIADLIIRLRTG. Residues 200 to 224 lie on the Cytoplasmic side of the membrane; sequence FLEQGLLVKDPKKLRDNYIHTLQFK. The chain crosses the membrane as a helical span at residues 225–243; sequence LDVASIIPTDLIYFAVGIH. The Extracellular segment spans residues 244-248; sequence SPEVR. The chain crosses the membrane as a helical span at residues 249–267; it reads FNRLLHFARMFEFFDRTET. The Cytoplasmic portion of the chain corresponds to 268–274; that stretch reads RTSYPNI. The interval 272 to 380 is ion conduction pathway; the sequence is PNIFRISNLV…GNVGSMISNM (109 aa). A helical transmembrane segment spans residues 275–298; the sequence is FRISNLVLYILVIIHWNACIYYVI. Residues 299–321 are Extracellular-facing; the sequence is SKSIGFGVDTWVYPNITDPEYGY. 2 consecutive transmembrane segments (helical) span residues 322–356 and 357–381; these read LARE…LFVI and FDFL…SNMN. A selectivity filter region spans residues 339 to 342; the sequence is TIGE. Residues 382–458 form a C-linker region; the sequence is ATRAEFQAKI…STLKKVRIFQ (77 aa). At 382 to 664 the chain is on the cytoplasmic side; the sequence is ATRAEFQAKI…INTPEPTAAE (283 aa). Residues 462–582 form a cyclic nucleotide-binding domain region; it reads AGLLVELVLK…EERGREILMK (121 aa). Residues Gly-522, Ser-525, Arg-538, and Thr-539 each contribute to the 3',5'-cyclic GMP site. 3',5'-cyclic AMP-binding residues include Arg-538 and Thr-539. Residues 599–653 are a coiled coil; sequence VQEKLEQLETNMDTLYTRFARLLAEYTGAQQKLKQRITVLETKMKQNHEDDYLSD.

The protein belongs to the cyclic nucleotide-gated cation channel (TC 1.A.1.5) family. CNGA2 subfamily. As to quaternary structure, the olfactory cyclic nucleotide-gated channel is an heterotetramer composed of CNGA2, CNGA4 and CNGB1b subunits with 2:1:1 stoichiometry. Olfactory neurons. Widely expressed in brain, enriched in deep cerebellar nuclei, olfactory bulb mitral cells and cerebellar Purkinje neurons. Expressed in olfactory sensory cilia (at protein level).

It is found in the cell projection. The protein resides in the cilium membrane. It catalyses the reaction Ca(2+)(in) = Ca(2+)(out). It carries out the reaction Na(+)(in) = Na(+)(out). The catalysed reaction is K(+)(in) = K(+)(out). The enzyme catalyses NH4(+)(in) = NH4(+)(out). It catalyses the reaction Rb(+)(in) = Rb(+)(out). It carries out the reaction Li(+)(in) = Li(+)(out). The catalysed reaction is Cs(+)(in) = Cs(+)(out). The channel activity is inhibited by L-cis diltiazem. Functionally, pore-forming subunit of the olfactory cyclic nucleotide-gated channel. Operates in the cilia of olfactory sensory neurons where chemical stimulation of the odorant is converted to an electrical signal. Mediates odorant-induced cAMP-dependent Ca(2+) influx triggering neuron depolarization. The rise of intracellular Ca(2+) levels potentiates the olfactory response by activating Ca(2+)-dependent Cl(-) channels, but it also serves as a negative feedback signal to desensitize the channel for rapid adaptation to odorants. Conducts cAMP- and cGMP-gated ion currents, with permeability for monovalent and divalent cations. The chain is Cyclic nucleotide-gated channel alpha-2 from Rattus norvegicus (Rat).